Here is a 223-residue protein sequence, read N- to C-terminus: NAD(P)H-hydrate epimerase (223 aa).

In terms of domain architecture, YjeF N-terminal spans 9–209 (MQKIDTYTVN…DIGLLTPPDF (201 aa)). 57 to 61 (NNGAD) provides a ligand contact to (6S)-NADPHX. Residues Asn58 and Asp119 each coordinate K(+). (6S)-NADPHX is bound by residues 123–129 (GTGLNNL) and Asp152. Thr155 serves as a coordination point for K(+).

It belongs to the NnrE/AIBP family. K(+) is required as a cofactor.

It carries out the reaction (6R)-NADHX = (6S)-NADHX. The enzyme catalyses (6R)-NADPHX = (6S)-NADPHX. Its function is as follows. Catalyzes the epimerization of the S- and R-forms of NAD(P)HX, a damaged form of NAD(P)H that is a result of enzymatic or heat-dependent hydration. This is a prerequisite for the S-specific NAD(P)H-hydrate dehydratase to allow the repair of both epimers of NAD(P)HX. This Leuconostoc gelidum subsp. gasicomitatum (strain DSM 15947 / CCUG 46042 / CECT 5767 / JCM 12535 / LMG 18811 / NBRC 113245 / TB1-10) (Leuconostoc gasicomitatum) protein is NAD(P)H-hydrate epimerase.